Here is a 427-residue protein sequence, read N- to C-terminus: Dihydroorotase (427 aa).

Positions 57 and 59 each coordinate Zn(2+). Residues 59 to 61 (HLR) and Asn91 contribute to the substrate site. Zn(2+) contacts are provided by Asp149, His176, and His229. Asn275 contacts substrate. Zn(2+) is bound at residue Asp302. Residue Asp302 is part of the active site. Substrate-binding positions include His306 and 320–321 (FG).

This sequence belongs to the metallo-dependent hydrolases superfamily. DHOase family. Class I DHOase subfamily. The cofactor is Zn(2+).

It carries out the reaction (S)-dihydroorotate + H2O = N-carbamoyl-L-aspartate + H(+). It functions in the pathway pyrimidine metabolism; UMP biosynthesis via de novo pathway; (S)-dihydroorotate from bicarbonate: step 3/3. Catalyzes the reversible cyclization of carbamoyl aspartate to dihydroorotate. This Shouchella clausii (strain KSM-K16) (Alkalihalobacillus clausii) protein is Dihydroorotase.